The following is a 692-amino-acid chain: Eomesodermin (692 aa).

Residues Asn-35–Pro-135 are disordered. The T-box DNA-binding region spans Leu-263–Asp-443. Residues Ser-578–Ser-692 form a required for transcription activation region. Disordered stretches follow at residues Thr-595–Pro-614 and Glu-621–Thr-673. 2 stretches are compositionally biased toward low complexity: residues Ser-596–Ser-609 and Ser-654–Pro-665.

Its subcellular location is the nucleus. Its function is as follows. Functions as a transcriptional activator playing a crucial role during development. Functions in gastrulation, regulating mesoderm differentiation. Activates wnt8, t/bra, chrd and mix-A/mix.1 expression. In Xenopus laevis (African clawed frog), this protein is Eomesodermin (eomes).